The chain runs to 227 residues: CDP-diacylglycerol--glycerol-3-phosphate 3-phosphatidyltransferase (227 aa).

5 helical membrane-spanning segments follow: residues isoleucine 30–alanine 50, valine 58–isoleucine 78, valine 112–leucine 132, tryptophan 159–leucine 179, and tryptophan 192–isoleucine 212.

It belongs to the CDP-alcohol phosphatidyltransferase class-I family.

The protein resides in the cell membrane. The enzyme catalyses a CDP-1,2-diacyl-sn-glycerol + sn-glycerol 3-phosphate = a 1,2-diacyl-sn-glycero-3-phospho-(1'-sn-glycero-3'-phosphate) + CMP + H(+). It participates in phospholipid metabolism; phosphatidylglycerol biosynthesis; phosphatidylglycerol from CDP-diacylglycerol: step 1/2. Functionally, this protein catalyzes the committed step to the synthesis of the acidic phospholipids. The sequence is that of CDP-diacylglycerol--glycerol-3-phosphate 3-phosphatidyltransferase (pgsA) from Mycoplasma pneumoniae (strain ATCC 29342 / M129 / Subtype 1) (Mycoplasmoides pneumoniae).